Here is a 131-residue protein sequence, read N- to C-terminus: Acyl carrier protein 3, mitochondrial (131 aa).

The N-terminal 39 residues, 1-39, are a transit peptide targeting the mitochondrion; the sequence is MHCIRSSILQHLRLRVSVRPTSLLQNENGFKSIGIFNFT. A Carrier domain is found at 49–124; it reads DQILSRVIEL…DVATYILSET (76 aa). O-(pantetheine 4'-phosphoryl)serine is present on S84.

It belongs to the acyl carrier protein (ACP) family. In terms of assembly, complex I is composed of at least 49 different subunits. In terms of processing, 4'-phosphopantetheine is transferred from CoA to a specific serine of the apo-ACP-like protein.

Its subcellular location is the mitochondrion. Its pathway is lipid metabolism; fatty acid biosynthesis. Its function is as follows. Carrier of the growing fatty acid chain in fatty acid biosynthesis. May be involved in the synthesis of short and medium chain fatty acids. Accessory and non-catalytic subunit of the mitochondrial membrane respiratory chain NADH dehydrogenase (Complex I), which functions in the transfer of electrons from NADH to the respiratory chain. This Arabidopsis thaliana (Mouse-ear cress) protein is Acyl carrier protein 3, mitochondrial (MTACP2).